Consider the following 282-residue polypeptide: F-box/SPRY domain-containing protein 1 (282 aa).

Residues 1 to 32 (MAAAAINAAAPPPPVAPTAPPPPPPPPLSQAS) form a disordered region. The span at 10–28 (APPPPVAPTAPPPPPPPPL) shows a compositional bias: pro residues. The region spanning 29-78 (SQASGRLPSRVLELVFSYLDLPDLRSCGLVCKHWYRCLHGDENSEVWRSL) is the F-box domain. One can recognise a B30.2/SPRY domain in the interval 88-280 (LRTDILCNLP…VTLVYLGKPL (193 aa)).

The protein belongs to the FBXO45/Fsn family. In terms of assembly, probable component of a E3 ubiquitin ligase complex.

The protein operates within protein modification; protein ubiquitination. This chain is F-box/SPRY domain-containing protein 1 (fbxo45), found in Xenopus tropicalis (Western clawed frog).